Consider the following 330-residue polypeptide: DNA-binding death effector domain-containing protein 2 (330 aa).

One can recognise a DED domain in the interval 25–104 (SLHRMFEVVG…RHDLLPHLAR (80 aa)). A Nuclear localization signal motif is present at residues 104 to 109 (RKRRRP). Residues 104–195 (RKRRRPVSPE…HQELGRPSSE (92 aa)) are disordered. Low complexity predominate over residues 137–147 (ASSSSDSPQSQ). A Bipartite nuclear localization signal motif is present at residues 156 to 174 (KRQRRSRGRPSSGARQRRR).

As to quaternary structure, interacts with CASP8, CASP10 and GTF3C3. Homodimerizes and heterodimerizes with DEDD. As to expression, expression is high in liver, heart, kidney, and testis but low in brain, spleen, lung, and skeleton muscle.

The protein resides in the nucleus. The protein localises to the nucleolus. Its function is as follows. May play a critical role in death receptor-induced apoptosis and may target CASP8 and CASP10 to the nucleus. May regulate degradation of intermediate filaments during apoptosis. May play a role in the general transcription machinery in the nucleus and might be an important regulator of the activity of GTF3C3. The sequence is that of DNA-binding death effector domain-containing protein 2 (Dedd2) from Mus musculus (Mouse).